Reading from the N-terminus, the 192-residue chain is 4'-phosphopantetheinyl transferase AcpT (192 aa).

The protein belongs to the P-Pant transferase superfamily. Gsp/Sfp/HetI/AcpT family.

The catalysed reaction is apo-[ACP] + CoA = holo-[ACP] + adenosine 3',5'-bisphosphate + H(+). Its function is as follows. May be involved in an alternative pathway for phosphopantetheinyl transfer and holo-ACP synthesis. The native apo-protein substrate is unknown. The chain is 4'-phosphopantetheinyl transferase AcpT (acpT) from Salmonella typhi.